The primary structure comprises 624 residues: Laccase-1 (624 aa).

A signal peptide spans 1-20; the sequence is MRGVVKLFFLSCSLVSLVSS. Plastocyanin-like domains lie at 69 to 183 and 195 to 355; these read TKAL…HSPN and DRIV…VVRY. Residues His-117, His-119, His-162, and His-164 each coordinate Cu cation. Cysteines 138 and 578 form a disulfide. N-linked (GlcNAc...) asparagine glycans are attached at residues Asn-242, Asn-320, and Asn-430. Residues 469–562 form the Plastocyanin-like 3 domain; sequence IIINNLDGVI…GKLAVVVIQP (94 aa). Cu cation-binding residues include His-480, His-483, and His-485. Asn-503 is a glycosylation site (N-linked (GlcNAc...) asparagine). Cu cation-binding residues include His-543, Cys-544, His-545, and His-549. Residues 582-603 are disordered; the sequence is DPNAFGPARRSPSPSIQSSKTS. The segment covering 592-603 has biased composition (low complexity); the sequence is SPSPSIQSSKTS.

The protein belongs to the multicopper oxidase family. Cu cation is required as a cofactor.

It localises to the secreted. The protein resides in the cell wall. It carries out the reaction 4 hydroquinone + O2 = 4 benzosemiquinone + 2 H2O. Functionally, laccase that catalyzes the oxidation of certain aromatic compounds, including L-dopa, to quinones, which then polymerize to melanin. Able to oxidize a wide variety of aromatic diphenol and diamino groups in the ortho, meta, and para positions but not monophenolic groups such as in phenol, tyramine, or tyrosine. Plays an important role in virulence. Plays a role in dissemination to extrapulmonary sites but is not involved in pulmonary growth or in elicitation of cellular immune responses in the lung. This Cryptococcus neoformans var. grubii serotype A (strain H99 / ATCC 208821 / CBS 10515 / FGSC 9487) (Filobasidiella neoformans var. grubii) protein is Laccase-1 (LAC1).